Consider the following 812-residue polypeptide: Leucine-rich repeat-containing protein 41 (812 aa).

The interaction with Elongin BC complex stretch occupies residues Ala-45–Val-54. 3 positions are modified to phosphoserine: Ser-155, Ser-276, and Ser-326. The interval Gly-267–Ala-408 is disordered. Position 327 is a phosphothreonine (Thr-327). Over residues Thr-354–Ser-381 the composition is skewed to low complexity. Ser-357 and Ser-373 each carry phosphoserine. The span at Pro-387–Arg-401 shows a compositional bias: basic residues. 7 LRR repeats span residues Trp-487–Leu-507, Ala-518–Leu-530, Phe-531–Ile-555, Ser-613–Val-635, Leu-636–Cys-659, Asn-701–Glu-728, and Ser-731–Phe-752.

Part of an E3 ubiquitin-protein ligase complex with Elongin BC (ELOB and ELOC), RBX1 and CUL5. Component of a probable ECS(LRRC41) complex which contains CUL5, RNF7/RBX2, Elongin BC and LRRC41. Interacts with CUL5, RNF7, ELOB and ELOC.

It participates in protein modification; protein ubiquitination. Functionally, probable substrate recognition component of an ECS (Elongin BC-CUL2/5-SOCS-box protein) E3 ubiquitin ligase complex which mediates the ubiquitination and subsequent proteasomal degradation of target proteins. In Homo sapiens (Human), this protein is Leucine-rich repeat-containing protein 41 (LRRC41).